The sequence spans 150 residues: Ribosome maturation factor RimP (150 aa).

This sequence belongs to the RimP family.

The protein localises to the cytoplasm. In terms of biological role, required for maturation of 30S ribosomal subunits. The polypeptide is Ribosome maturation factor RimP (Francisella tularensis subsp. holarctica (strain LVS)).